Reading from the N-terminus, the 309-residue chain is ADP-L-glycero-D-manno-heptose-6-epimerase (309 aa).

Residues 10 to 11 (FI), 31 to 32 (DN), K38, K53, 75 to 79 (EGACS), and N92 each bind NADP(+). Y140 acts as the Proton acceptor in catalysis. K144 is an NADP(+) binding site. N169 is a binding site for substrate. V170 and K178 together coordinate NADP(+). The active-site Proton acceptor is K178. Substrate is bound by residues S180, H187, 201–204 (FEGS), R209, and Y272.

Belongs to the NAD(P)-dependent epimerase/dehydratase family. HldD subfamily. Homopentamer. NADP(+) is required as a cofactor.

The catalysed reaction is ADP-D-glycero-beta-D-manno-heptose = ADP-L-glycero-beta-D-manno-heptose. It functions in the pathway nucleotide-sugar biosynthesis; ADP-L-glycero-beta-D-manno-heptose biosynthesis; ADP-L-glycero-beta-D-manno-heptose from D-glycero-beta-D-manno-heptose 7-phosphate: step 4/4. In terms of biological role, catalyzes the interconversion between ADP-D-glycero-beta-D-manno-heptose and ADP-L-glycero-beta-D-manno-heptose via an epimerization at carbon 6 of the heptose. In Enterobacter sp. (strain 638), this protein is ADP-L-glycero-D-manno-heptose-6-epimerase.